The primary structure comprises 238 residues: uncharacterized protein (238 aa).

An HTH gntR-type domain is found at 1–68 (MIYKSIAERL…HGSGTYLVRK (68 aa)). The segment at residues 28–47 (EKKLAEEFAVSRMTIRKAID) is a DNA-binding region (H-T-H motif).

This is an uncharacterized protein from Escherichia coli (strain K12).